We begin with the raw amino-acid sequence, 2552 residues long: Probable polyketide synthase 40 (2552 aa).

One can recognise a Ketosynthase family 3 (KS3) domain in the interval C13–S443. Active-site for beta-ketoacyl synthase activity residues include C179, H320, and H362. Residues G629 to Y662 are acyl/malonyl transferase. Catalysis depends on S639, which acts as the For acyl/malonyl transferase activity. Positions I928 to Q1063 are N-terminal hotdog fold. The 308-residue stretch at I928 to S1235 folds into the PKS/mFAS DH domain. Catalysis depends on H962, which acts as the Proton acceptor; for dehydratase activity. The interval N1087–S1235 is C-terminal hotdog fold. D1149 acts as the Proton donor; for dehydratase activity in catalysis. One can recognise a Carrier domain in the interval D2467–I2546. An O-(pantetheine 4'-phosphoryl)serine modification is found at S2505.

Requires pantetheine 4'-phosphate as cofactor.

Its function is as follows. Probable polyketide synthase. In Dictyostelium discoideum (Social amoeba), this protein is Probable polyketide synthase 40 (pks40).